We begin with the raw amino-acid sequence, 311 residues long: Putative methylthioribose-1-phosphate isomerase (311 aa).

Substrate is bound by residues 46–48 (RGA), Arg80, and Gln174. Residue Asp215 is the Proton donor of the active site. 224-225 (NK) lines the substrate pocket.

It belongs to the eIF-2B alpha/beta/delta subunits family. MtnA subfamily.

The enzyme catalyses 5-(methylsulfanyl)-alpha-D-ribose 1-phosphate = 5-(methylsulfanyl)-D-ribulose 1-phosphate. In terms of biological role, catalyzes the interconversion of methylthioribose-1-phosphate (MTR-1-P) into methylthioribulose-1-phosphate (MTRu-1-P). In Methanothermobacter thermautotrophicus (strain ATCC 29096 / DSM 1053 / JCM 10044 / NBRC 100330 / Delta H) (Methanobacterium thermoautotrophicum), this protein is Putative methylthioribose-1-phosphate isomerase.